The chain runs to 130 residues: Protein ApaG (130 aa).

Positions 3-127 (KAETRGISVT…FSLDSPHVRR (125 aa)) constitute an ApaG domain.

In Methylobacterium radiotolerans (strain ATCC 27329 / DSM 1819 / JCM 2831 / NBRC 15690 / NCIMB 10815 / 0-1), this protein is Protein ApaG.